The primary structure comprises 606 residues: Methionine--tRNA ligase (606 aa).

The short motif at 14 to 24 (PYANGPRHIGH) is the 'HIGH' region element. Zn(2+) is bound by residues Cys-146, Cys-149, Cys-159, and Cys-162. Residues 351–355 (KFSSS) carry the 'KMSKS' region motif. Residue Ser-354 coordinates ATP.

The protein belongs to the class-I aminoacyl-tRNA synthetase family. MetG type 1 subfamily. Monomer. Zn(2+) serves as cofactor.

The protein resides in the cytoplasm. It carries out the reaction tRNA(Met) + L-methionine + ATP = L-methionyl-tRNA(Met) + AMP + diphosphate. Is required not only for elongation of protein synthesis but also for the initiation of all mRNA translation through initiator tRNA(fMet) aminoacylation. The polypeptide is Methionine--tRNA ligase (Thermobifida fusca (strain YX)).